Reading from the N-terminus, the 72-residue chain is Large ribosomal subunit protein bL32 (72 aa).

It belongs to the bacterial ribosomal protein bL32 family.

The sequence is that of Large ribosomal subunit protein bL32 from Dehalococcoides mccartyi (strain ATCC BAA-2100 / JCM 16839 / KCTC 5957 / BAV1).